A 283-amino-acid chain; its full sequence is Cyclin-C (283 aa).

Residues Asp20 to Ile151 form the Cyclin N-terminal domain. A disordered region spans residues Thr252–Ser283. Polar residues predominate over residues Pro272–Ser283. Residue Ser275 is modified to Phosphoserine.

Belongs to the cyclin family. Cyclin C subfamily. In terms of assembly, component of the Mediator complex, which is composed of MED1, MED4, MED6, MED7, MED8, MED9, MED10, MED11, MED12, MED13, MED13L, MED14, MED15, MED16, MED17, MED18, MED19, MED20, MED21, MED22, MED23, MED24, MED25, MED26, MED27, MED29, MED30, MED31, CCNC, CDK8 and CDC2L6/CDK11. The MED12, MED13, CCNC and CDK8 subunits form a distinct module termed the CDK8 module. Mediator containing the CDK8 module is less active than Mediator lacking this module in supporting transcriptional activation. Individual preparations of the Mediator complex lacking one or more distinct subunits have been variously termed ARC, CRSP, DRIP, PC2, SMCC and TRAP. The cylin/CDK pair formed by CCNC/CDK8 also associates with the large subunit of RNA polymerase II.

It localises to the nucleus. In terms of biological role, component of the Mediator complex, a coactivator involved in regulated gene transcription of nearly all RNA polymerase II-dependent genes. Mediator functions as a bridge to convey information from gene-specific regulatory proteins to the basal RNA polymerase II transcription machinery. Mediator is recruited to promoters by direct interactions with regulatory proteins and serves as a scaffold for the assembly of a functional preinitiation complex with RNA polymerase II and the general transcription factors. Binds to and activates cyclin-dependent kinase CDK8 that phosphorylates the CTD (C-terminal domain) of the large subunit of RNA polymerase II (RNAp II), which may inhibit the formation of a transcription initiation complex. This Mus musculus (Mouse) protein is Cyclin-C (Ccnc).